The following is a 285-amino-acid chain: MDKIKVGLQYWIPQHGLTRLVGKLASAKAGSLTTAVIRWFIKQYNVNMDEAKHSDPKHFKTFNEFFVRELKEGARPITEGDEIITHPADACVSQFGPIEDGQLIQAKGHNYSAQELLGGDEKLAEEFKDGSFATLYLSPRDYHRVHMPCDGTLRQMIYVPGDLFSVNPLTAENVPNLFARNERVVCIFDTEFGPMAQVLVGATIVGSIEQVWAGTITPPRGNTVYKWDYPAEGDKAVILKKGEEMGRFKLGSTVINLFAKDAIEFDVSMENGQPTVMGTPYALKK.

Catalysis depends on charge relay system; for autoendoproteolytic cleavage activity residues Asp-89, His-146, and Ser-252. The Schiff-base intermediate with substrate; via pyruvic acid; for decarboxylase activity role is filled by Ser-252. Ser-252 is subject to Pyruvic acid (Ser); by autocatalysis.

This sequence belongs to the phosphatidylserine decarboxylase family. PSD-B subfamily. Prokaryotic type I sub-subfamily. As to quaternary structure, heterodimer of a large membrane-associated beta subunit and a small pyruvoyl-containing alpha subunit. The cofactor is pyruvate. Post-translationally, is synthesized initially as an inactive proenzyme. Formation of the active enzyme involves a self-maturation process in which the active site pyruvoyl group is generated from an internal serine residue via an autocatalytic post-translational modification. Two non-identical subunits are generated from the proenzyme in this reaction, and the pyruvate is formed at the N-terminus of the alpha chain, which is derived from the carboxyl end of the proenzyme. The autoendoproteolytic cleavage occurs by a canonical serine protease mechanism, in which the side chain hydroxyl group of the serine supplies its oxygen atom to form the C-terminus of the beta chain, while the remainder of the serine residue undergoes an oxidative deamination to produce ammonia and the pyruvoyl prosthetic group on the alpha chain. During this reaction, the Ser that is part of the protease active site of the proenzyme becomes the pyruvoyl prosthetic group, which constitutes an essential element of the active site of the mature decarboxylase.

It localises to the cell membrane. It carries out the reaction a 1,2-diacyl-sn-glycero-3-phospho-L-serine + H(+) = a 1,2-diacyl-sn-glycero-3-phosphoethanolamine + CO2. It functions in the pathway phospholipid metabolism; phosphatidylethanolamine biosynthesis; phosphatidylethanolamine from CDP-diacylglycerol: step 2/2. In terms of biological role, catalyzes the formation of phosphatidylethanolamine (PtdEtn) from phosphatidylserine (PtdSer). The protein is Phosphatidylserine decarboxylase proenzyme of Vibrio parahaemolyticus serotype O3:K6 (strain RIMD 2210633).